Here is a 77-residue protein sequence, read N- to C-terminus: uncharacterized protein (77 aa).

A disordered region spans residues 54–77; the sequence is HHGRKHKEDMEARHEQLTKGGTIL. Residues 59 to 70 are compositionally biased toward basic and acidic residues; it reads HKEDMEARHEQL.

This is an uncharacterized protein from Escherichia coli O157:H7.